The following is a 526-amino-acid chain: ATP synthase subunit alpha (526 aa).

171 to 178 is an ATP binding site; it reads GDRQTGKT.

This sequence belongs to the ATPase alpha/beta chains family. F-type ATPases have 2 components, CF(1) - the catalytic core - and CF(0) - the membrane proton channel. CF(1) has five subunits: alpha(3), beta(3), gamma(1), delta(1), epsilon(1). CF(0) has four main subunits: a, b, b' and c.

It is found in the cell inner membrane. It catalyses the reaction ATP + H2O + 4 H(+)(in) = ADP + phosphate + 5 H(+)(out). Its function is as follows. Produces ATP from ADP in the presence of a proton gradient across the membrane. The alpha chain is a regulatory subunit. This chain is ATP synthase subunit alpha, found in Pelodictyon phaeoclathratiforme (strain DSM 5477 / BU-1).